A 249-amino-acid chain; its full sequence is Ribonuclease 3 (249 aa).

An RNase III domain is found at 29-151; the sequence is SSDIEVIKKN…LIGALYECLR (123 aa). Residue glutamate 65 participates in Mg(2+) binding. Residue aspartate 69 is part of the active site. The Mg(2+) site is built by glutamate 137 and glutamate 140. Glutamate 140 is a catalytic residue. One can recognise a DRBM domain in the interval 179–249; it reads NEKSALQEWS…AKEALKKLTN (71 aa). The interval 227–249 is disordered; it reads GWGSSRKKAQKEAAKEALKKLTN. The segment covering 236 to 249 has biased composition (basic and acidic residues); that stretch reads QKEAAKEALKKLTN.

Belongs to the ribonuclease III family. Homodimer. Mg(2+) serves as cofactor.

The protein localises to the cytoplasm. It carries out the reaction Endonucleolytic cleavage to 5'-phosphomonoester.. Its function is as follows. Digests double-stranded RNA. Involved in the processing of primary rRNA transcript to yield the immediate precursors to the large and small rRNAs (23S and 16S). Processes some mRNAs, and tRNAs when they are encoded in the rRNA operon. Processes pre-crRNA and tracrRNA of type II CRISPR loci if present in the organism. This is Ribonuclease 3 from Prochlorococcus marinus (strain SARG / CCMP1375 / SS120).